The sequence spans 159 residues: uncharacterized protein (159 aa).

Transmembrane regions (helical) follow at residues 17 to 37 (ALFI…TILV) and 40 to 60 (LLQF…FKKY).

Its subcellular location is the cell membrane. This is an uncharacterized protein from Borreliella burgdorferi (strain ATCC 35210 / DSM 4680 / CIP 102532 / B31) (Borrelia burgdorferi).